We begin with the raw amino-acid sequence, 221 residues long: MQKPSLELKGSSFTLSVLHINDADLDGVARELDDKLAIAPQFFLGAPLVVNLSAISDPDYNLAGLKDLLISRQLVIVGITGAPSAIANQAKALGLALIKSGKQSQTQPQLPKTTKIVKQNIRSGQQIYAQNGDLIIIGAVGNGAEVIADGSIHIYGSLRGKAMAGANGDKNAVIIAQNIDAELVSIAGQYWLTENLQAHASIKSGCIRLDGDSLTVEALSL.

This sequence belongs to the MinC family. In terms of assembly, interacts with MinD and FtsZ.

Cell division inhibitor that blocks the formation of polar Z ring septums. Rapidly oscillates between the poles of the cell to destabilize FtsZ filaments that have formed before they mature into polar Z rings. Prevents FtsZ polymerization. The chain is Probable septum site-determining protein MinC from Shewanella loihica (strain ATCC BAA-1088 / PV-4).